Consider the following 187-residue polypeptide: Pyridoxal 5'-phosphate synthase subunit PdxT (187 aa).

L-glutamine is bound at residue 47 to 49 (GES). Cysteine 76 acts as the Nucleophile in catalysis. L-glutamine is bound by residues arginine 102 and 128–129 (IR). Residues histidine 165 and glutamate 167 each act as charge relay system in the active site.

Belongs to the glutaminase PdxT/SNO family. In terms of assembly, in the presence of PdxS, forms a dodecamer of heterodimers. Only shows activity in the heterodimer.

The catalysed reaction is aldehydo-D-ribose 5-phosphate + D-glyceraldehyde 3-phosphate + L-glutamine = pyridoxal 5'-phosphate + L-glutamate + phosphate + 3 H2O + H(+). It carries out the reaction L-glutamine + H2O = L-glutamate + NH4(+). The protein operates within cofactor biosynthesis; pyridoxal 5'-phosphate biosynthesis. Functionally, catalyzes the hydrolysis of glutamine to glutamate and ammonia as part of the biosynthesis of pyridoxal 5'-phosphate. The resulting ammonia molecule is channeled to the active site of PdxS. The chain is Pyridoxal 5'-phosphate synthase subunit PdxT from Methanococcus maripaludis (strain C5 / ATCC BAA-1333).